A 577-amino-acid chain; its full sequence is Arginine--tRNA ligase (577 aa).

Positions 122-132 (PNVAKEMHVGH) match the 'HIGH' region motif.

The protein belongs to the class-I aminoacyl-tRNA synthetase family. In terms of assembly, monomer.

Its subcellular location is the cytoplasm. The enzyme catalyses tRNA(Arg) + L-arginine + ATP = L-arginyl-tRNA(Arg) + AMP + diphosphate. The sequence is that of Arginine--tRNA ligase from Escherichia coli O157:H7 (strain EC4115 / EHEC).